The following is a 257-amino-acid chain: Acetylglutamate kinase (257 aa).

Substrate is bound by residues 43–44, arginine 65, and asparagine 157; that span reads GG. Residues 180 to 185 and 208 to 210 each bind ATP; these read DVSGIL and IIT.

It belongs to the acetylglutamate kinase family. ArgB subfamily. As to quaternary structure, homodimer.

The protein resides in the cytoplasm. The catalysed reaction is N-acetyl-L-glutamate + ATP = N-acetyl-L-glutamyl 5-phosphate + ADP. It participates in amino-acid biosynthesis; L-arginine biosynthesis; N(2)-acetyl-L-ornithine from L-glutamate: step 2/4. In terms of biological role, catalyzes the ATP-dependent phosphorylation of N-acetyl-L-glutamate. In Pectobacterium carotovorum subsp. carotovorum (strain PC1), this protein is Acetylglutamate kinase.